The following is a 463-amino-acid chain: Chromosomal replication initiator protein DnaA (463 aa).

Residues 1–83 (MSTNQIILTD…LQLFQHYNNT (83 aa)) are domain I, interacts with DnaA modulators. A domain II region spans residues 83–124 (TIKSIEIITKELPGTTQTVTELPTKTFADIGSSELNSENIFS). The domain III, AAA+ region stretch occupies residues 125–343 (TLDVRFTFDN…GALNKVIAHS (219 aa)). Residues glycine 171, glycine 173, lysine 174, and threonine 175 each contribute to the ATP site. Positions 344-463 (NFTLKEITLE…INLLMKILQN (120 aa)) are domain IV, binds dsDNA.

The protein belongs to the DnaA family. As to quaternary structure, oligomerizes as a right-handed, spiral filament on DNA at oriC.

It localises to the cytoplasm. In terms of biological role, plays an essential role in the initiation and regulation of chromosomal replication. ATP-DnaA binds to the origin of replication (oriC) to initiate formation of the DNA replication initiation complex once per cell cycle. Binds the DnaA box (a 9 base pair repeat at the origin) and separates the double-stranded (ds)DNA. Forms a right-handed helical filament on oriC DNA; dsDNA binds to the exterior of the filament while single-stranded (ss)DNA is stabiized in the filament's interior. The ATP-DnaA-oriC complex binds and stabilizes one strand of the AT-rich DNA unwinding element (DUE), permitting loading of DNA polymerase. After initiation quickly degrades to an ADP-DnaA complex that is not apt for DNA replication. Binds acidic phospholipids. This is Chromosomal replication initiator protein DnaA from Rickettsia conorii (strain ATCC VR-613 / Malish 7).